The following is a 496-amino-acid chain: Lysine--tRNA ligase (496 aa).

The Mg(2+) site is built by E409 and E416.

Belongs to the class-II aminoacyl-tRNA synthetase family. As to quaternary structure, homodimer. Mg(2+) serves as cofactor.

The protein localises to the cytoplasm. The enzyme catalyses tRNA(Lys) + L-lysine + ATP = L-lysyl-tRNA(Lys) + AMP + diphosphate. The polypeptide is Lysine--tRNA ligase (Streptococcus thermophilus (strain ATCC BAA-491 / LMD-9)).